Consider the following 141-residue polypeptide: Probable trafficking protein particle complex subunit 2 (141 aa).

Belongs to the TRAPP small subunits family. Sedlin subfamily. In terms of assembly, part of the multisubunit TRAPP (transport protein particle) complex.

It is found in the cytoplasm. The protein resides in the perinuclear region. Its subcellular location is the endoplasmic reticulum. The protein localises to the golgi apparatus. May play a role in vesicular transport from endoplasmic reticulum to Golgi. Required for the systemic spread of the RNAi response. The chain is Probable trafficking protein particle complex subunit 2 (sedl-1) from Caenorhabditis elegans.